The chain runs to 395 residues: Putative 8-amino-7-oxononanoate synthase (395 aa).

Arginine 23 serves as a coordination point for substrate. 110–111 (GY) provides a ligand contact to pyridoxal 5'-phosphate. A substrate-binding site is contributed by histidine 135. Pyridoxal 5'-phosphate is bound by residues serine 181, 206–209 (DEAH), and 237–240 (TFSK). The residue at position 240 (lysine 240) is an N6-(pyridoxal phosphate)lysine. Threonine 354 provides a ligand contact to substrate.

It belongs to the class-II pyridoxal-phosphate-dependent aminotransferase family. BioF subfamily. In terms of assembly, homodimer. Requires pyridoxal 5'-phosphate as cofactor.

The enzyme catalyses 6-carboxyhexanoyl-[ACP] + L-alanine + H(+) = (8S)-8-amino-7-oxononanoate + holo-[ACP] + CO2. Its pathway is cofactor biosynthesis; biotin biosynthesis. In terms of biological role, catalyzes the decarboxylative condensation of pimeloyl-[acyl-carrier protein] and L-alanine to produce 8-amino-7-oxononanoate (AON), [acyl-carrier protein], and carbon dioxide. The polypeptide is Putative 8-amino-7-oxononanoate synthase (bioF) (Halalkalibacterium halodurans (strain ATCC BAA-125 / DSM 18197 / FERM 7344 / JCM 9153 / C-125) (Bacillus halodurans)).